The following is a 224-amino-acid chain: Proteasome subunit beta (224 aa).

A propeptide spans 1–6 (removed in mature form; by autocatalysis); that stretch reads MDVMKG. Thr-7 serves as the catalytic Nucleophile.

It belongs to the peptidase T1B family. The 20S proteasome core is composed of 14 alpha and 14 beta subunits that assemble into four stacked heptameric rings, resulting in a barrel-shaped structure. The two inner rings, each composed of seven catalytic beta subunits, are sandwiched by two outer rings, each composed of seven alpha subunits. The catalytic chamber with the active sites is on the inside of the barrel. Has a gated structure, the ends of the cylinder being occluded by the N-termini of the alpha-subunits. Is capped at one or both ends by the proteasome regulatory ATPase, PAN.

The protein resides in the cytoplasm. It carries out the reaction Cleavage of peptide bonds with very broad specificity.. The formation of the proteasomal ATPase PAN-20S proteasome complex, via the docking of the C-termini of PAN into the intersubunit pockets in the alpha-rings, triggers opening of the gate for substrate entry. Interconversion between the open-gate and close-gate conformations leads to a dynamic regulation of the 20S proteasome proteolysis activity. Component of the proteasome core, a large protease complex with broad specificity involved in protein degradation. In Methanocaldococcus fervens (strain DSM 4213 / JCM 15782 / AG86) (Methanococcus fervens), this protein is Proteasome subunit beta.